The sequence spans 629 residues: Replication protein A 70 kDa DNA-binding subunit D (629 aa).

A disordered region spans residues 112-135; sequence LDSKSGEEEAREPKKQKLEHSPVS. The segment covering 115–131 has biased composition (basic and acidic residues); the sequence is KSGEEEAREPKKQKLEH. The segment at residues 194–280 is a DNA-binding region (OB); the sequence is WTIKVRVTNK…QNDYEMTLNE (87 aa). Residues 492 to 512 form a C4-type zinc finger; it reads CKTCNKKVTEALDSGYWCEGC.

Belongs to the replication factor A protein 1 family. Heterotrimer of RPA1, RPA2 and RPA3 (canonical replication protein A complex).

Its subcellular location is the nucleus. Its function is as follows. Component of the replication protein A complex (RPA) required for DNA recombination, repair and replication. The activity of RPA is mediated by single-stranded DNA binding and protein interactions. Probably involved in repair of double-strand DNA breaks (DSBs) induced by genotoxic stresses. The polypeptide is Replication protein A 70 kDa DNA-binding subunit D (RPA1D) (Arabidopsis thaliana (Mouse-ear cress)).